A 611-amino-acid polypeptide reads, in one-letter code: UPF0508 protein SCY_3114 (611 aa).

It belongs to the UPF0508 family.

This chain is UPF0508 protein SCY_3114, found in Saccharomyces cerevisiae (strain YJM789) (Baker's yeast).